The sequence spans 134 residues: Ribonuclease VapC1 (134 aa).

The region spanning 3 to 132 (YMLDTNIIIY…RITDLQWQDW (130 aa)) is the PINc domain. Mg(2+) contacts are provided by Asp6 and Asp99.

The protein belongs to the PINc/VapC protein family. In terms of assembly, forms a complex with VapB1. It depends on Mg(2+) as a cofactor.

In terms of biological role, toxic component of a type II toxin-antitoxin (TA) system. Upon expression in E.coli inhibits growth in liquid culture. Its toxic effect is neutralized by coexpression with antitoxin VapB1. Degrades RNA but not ss- or ds-DNA in vitro, degradation is inhibited by VapB1 antitoxin. The chain is Ribonuclease VapC1 from Haemophilus influenzae (strain R2866).